We begin with the raw amino-acid sequence, 65 residues long: MNEITPLFDEEVIKVLVQTRNLLEEILETLDIMADKELMEAIFKSENEIRQGKTRNFKEILKELP.

This is an uncharacterized protein from Archaeoglobus fulgidus (strain ATCC 49558 / DSM 4304 / JCM 9628 / NBRC 100126 / VC-16).